The following is a 300-amino-acid chain: Fructose-bisphosphate aldolase class 1 (300 aa).

Glutamate 181 (proton acceptor) is an active-site residue. Residue lysine 218 is the Schiff-base intermediate with dihydroxyacetone-P of the active site.

Belongs to the class I fructose-bisphosphate aldolase family.

It catalyses the reaction beta-D-fructose 1,6-bisphosphate = D-glyceraldehyde 3-phosphate + dihydroxyacetone phosphate. The protein operates within carbohydrate degradation; glycolysis; D-glyceraldehyde 3-phosphate and glycerone phosphate from D-glucose: step 4/4. The polypeptide is Fructose-bisphosphate aldolase class 1 (fda) (Synechocystis sp. (strain ATCC 27184 / PCC 6803 / Kazusa)).